Reading from the N-terminus, the 914-residue chain is DNA mismatch repair protein MutS (914 aa).

The disordered stretch occupies residues 1 to 24; sequence MDNKTDNKNNLTPQSAPSSAPHKE. Polar residues predominate over residues 8–18; that stretch reads KNNLTPQSAPS. 662-669 serves as a coordination point for ATP; sequence GPNMGGKS.

Belongs to the DNA mismatch repair MutS family.

Its function is as follows. This protein is involved in the repair of mismatches in DNA. It is possible that it carries out the mismatch recognition step. This protein has a weak ATPase activity. The chain is DNA mismatch repair protein MutS from Bartonella henselae (strain ATCC 49882 / DSM 28221 / CCUG 30454 / Houston 1) (Rochalimaea henselae).